The primary structure comprises 337 residues: MFPFVPLSLYVAKKLFRARGFRFCQKPGVLALAPEVDPCSIQHEVTGAETPHEELQYLRQLREILCRGSDRLDRTGIGTLSLFGMQARYSLRDHFPLLTTKRVFWRGVVQELLWFLKGSTDSRELSRTGVKIWDKNGSREFLAGRGLAHRREGDLGPVYGFQWRHFGAAYVDADADYTGQGFDQLSYIVDLIKNNPHDRRIIMCAWNPADLSLMALPPCHLLCQFYVADGELSCQLYQRSGDMGLGVPFNIASYSLLTYMLAHVTGLRPGEFIHTLGDAHIYKTHIEPLRLQLTRTPRPFPRLEILRSVSSMEEFTPDDFRLVDYCPHPTIRMEMAV.

DUMP-binding positions include arginine 74 and 199–200 (RR). Cysteine 219 functions as the Nucleophile in the catalytic mechanism. DUMP-binding positions include 239–242 (RSGD), asparagine 250, and 280–282 (HIY). Position 242 (aspartate 242) interacts with (6R)-5,10-methylene-5,6,7,8-tetrahydrofolate. Alanine 336 is a binding site for (6R)-5,10-methylene-5,6,7,8-tetrahydrofolate.

This sequence belongs to the thymidylate synthase family. Homodimer.

The catalysed reaction is dUMP + (6R)-5,10-methylene-5,6,7,8-tetrahydrofolate = 7,8-dihydrofolate + dTMP. It participates in pyrimidine metabolism; dTTP biosynthesis. This is Thymidylate synthase (70) from Homo sapiens (Human).